The primary structure comprises 509 residues: 2-isopropylmalate synthase (509 aa).

Positions 5-267 constitute a Pyruvate carboxyltransferase domain; that stretch reads IQIFDTTLRD…QTALNLEETK (263 aa). 4 residues coordinate Mn(2+): Asp14, His202, His204, and Asn238. The segment at 391–509 is regulatory domain; it reads KLETLQLQYV…AAENVEKVGN (119 aa).

This sequence belongs to the alpha-IPM synthase/homocitrate synthase family. LeuA type 1 subfamily. In terms of assembly, homodimer. Mn(2+) is required as a cofactor.

It localises to the cytoplasm. It catalyses the reaction 3-methyl-2-oxobutanoate + acetyl-CoA + H2O = (2S)-2-isopropylmalate + CoA + H(+). The protein operates within amino-acid biosynthesis; L-leucine biosynthesis; L-leucine from 3-methyl-2-oxobutanoate: step 1/4. Catalyzes the condensation of the acetyl group of acetyl-CoA with 3-methyl-2-oxobutanoate (2-ketoisovalerate) to form 3-carboxy-3-hydroxy-4-methylpentanoate (2-isopropylmalate). The polypeptide is 2-isopropylmalate synthase (Staphylococcus aureus (strain bovine RF122 / ET3-1)).